The primary structure comprises 141 residues: Holo-[acyl-carrier-protein] synthase (141 aa).

The Mg(2+) site is built by D8 and E61.

Belongs to the P-Pant transferase superfamily. AcpS family. Mg(2+) is required as a cofactor.

The protein localises to the cytoplasm. The enzyme catalyses apo-[ACP] + CoA = holo-[ACP] + adenosine 3',5'-bisphosphate + H(+). Transfers the 4'-phosphopantetheine moiety from coenzyme A to a Ser of acyl-carrier-protein. This chain is Holo-[acyl-carrier-protein] synthase, found in Rhodopseudomonas palustris (strain HaA2).